Here is a 174-residue protein sequence, read N- to C-terminus: Adenine phosphoribosyltransferase (174 aa).

Belongs to the purine/pyrimidine phosphoribosyltransferase family. Homodimer.

It localises to the cytoplasm. The enzyme catalyses AMP + diphosphate = 5-phospho-alpha-D-ribose 1-diphosphate + adenine. It functions in the pathway purine metabolism; AMP biosynthesis via salvage pathway; AMP from adenine: step 1/1. Catalyzes a salvage reaction resulting in the formation of AMP, that is energically less costly than de novo synthesis. The sequence is that of Adenine phosphoribosyltransferase from Phocaeicola vulgatus (strain ATCC 8482 / DSM 1447 / JCM 5826 / CCUG 4940 / NBRC 14291 / NCTC 11154) (Bacteroides vulgatus).